The sequence spans 88 residues: Small ribosomal subunit protein bS20 (88 aa).

Residues 1–16 (MANTHSAKKATRKITR) are compositionally biased toward basic residues. Residues 1–20 (MANTHSAKKATRKITRRTAV) form a disordered region.

This sequence belongs to the bacterial ribosomal protein bS20 family.

Functionally, binds directly to 16S ribosomal RNA. In Nitrobacter hamburgensis (strain DSM 10229 / NCIMB 13809 / X14), this protein is Small ribosomal subunit protein bS20.